We begin with the raw amino-acid sequence, 355 residues long: Protein HGH1 homolog (355 aa).

Positions 324-355 are disordered; sequence DEEGDPTPEEIEQMNKKQKLEDEDAQFETDEI. Acidic residues-rich tracts occupy residues 325 to 335 and 344 to 355; these read EEGDPTPEEIE and EDEDAQFETDEI.

The protein belongs to the HGH1 family.

In Dictyostelium discoideum (Social amoeba), this protein is Protein HGH1 homolog.